The following is a 621-amino-acid chain: Kelch-like protein 40 (621 aa).

The BTB domain maps to 33–98 (LDCVVRVGER…LYTSEIALDE (66 aa)). The BACK domain occupies 133 to 239 (CLAVFRLGLL…PRAFLETRVE (107 aa)). A disordered region spans residues 265-298 (LTTLRKKKKEKGEQTARAKEANQGTEDTKAEDDE). Residues 274–284 (EKGEQTARAKE) are compositionally biased toward basic and acidic residues. Kelch repeat units follow at residues 360–412 (QVFV…EALN), 413–462 (AIYV…SHMD), 463–510 (LVYV…VHDG), 512–557 (IFVA…SLAG), and 559–613 (LYAL…PVRL).

It belongs to the KLHL40 family. Component of the BCR(KLHL40) E3 ubiquitin ligase complex, at least composed of CUL3, KLHL40 and RBX1. Interacts with LMOD3. Specifically expressed in skeletal muscles in embryonic, neonatal and adults. Expressed in various types of muscles, including extensor digitorum longus, gastrocnemius, soleus, diaphragm, masseter and heart (at protein level). Not detected in brain, liver and lung (at protein level).

The protein resides in the cytoplasm. It is found in the myofibril. It localises to the sarcomere. The protein localises to the a band. Its subcellular location is the i band. Functionally, substrate-specific adapter of a BCR (BTB-CUL3-RBX1) E3 ubiquitin ligase complex that acts as a key regulator of skeletal muscle development. The BCR(KLHL40) complex acts by mediating ubiquitination and degradation of TFDP1, thereby regulating the activity of the E2F:DP transcription factor complex. Promotes stabilization of LMOD3 by acting as a negative regulator of LMOD3 ubiquitination; the molecular process by which it negatively regulates ubiquitination of LMOD3 is however unclear. The protein is Kelch-like protein 40 of Mus musculus (Mouse).